Reading from the N-terminus, the 320-residue chain is 1-aminocyclopropane-1-carboxylate oxidase (320 aa).

Positions 154-254 constitute a Fe2OG dioxygenase domain; the sequence is PTFGTKVSNY…RMSLASFYNP (101 aa). Fe cation contacts are provided by H178, D180, and H235.

It belongs to the iron/ascorbate-dependent oxidoreductase family. Fe cation serves as cofactor.

It catalyses the reaction 1-aminocyclopropane-1-carboxylate + L-ascorbate + O2 = ethene + L-dehydroascorbate + hydrogen cyanide + CO2 + 2 H2O. Its pathway is alkene biosynthesis; ethylene biosynthesis via S-adenosyl-L-methionine; ethylene from S-adenosyl-L-methionine: step 2/2. This chain is 1-aminocyclopropane-1-carboxylate oxidase (ACO), found in Persea americana (Avocado).